The sequence spans 838 residues: 1,4-alpha-glucan branching enzyme GlgB 1 (838 aa).

The segment covering Met1–Ala11 has biased composition (basic and acidic residues). 2 disordered regions span residues Met1–Lys98 and Pro116–Gly142. Residues Lys29–Lys57 are compositionally biased toward low complexity. Asp513 functions as the Nucleophile in the catalytic mechanism. Glu566 acts as the Proton donor in catalysis. The interval Thr793–Ser822 is disordered.

It belongs to the glycosyl hydrolase 13 family. GlgB subfamily. As to quaternary structure, monomer.

It catalyses the reaction Transfers a segment of a (1-&gt;4)-alpha-D-glucan chain to a primary hydroxy group in a similar glucan chain.. Its pathway is glycan biosynthesis; glycogen biosynthesis. Functionally, catalyzes the formation of the alpha-1,6-glucosidic linkages in glycogen by scission of a 1,4-alpha-linked oligosaccharide from growing alpha-1,4-glucan chains and the subsequent attachment of the oligosaccharide to the alpha-1,6 position. The protein is 1,4-alpha-glucan branching enzyme GlgB 1 of Streptomyces avermitilis (strain ATCC 31267 / DSM 46492 / JCM 5070 / NBRC 14893 / NCIMB 12804 / NRRL 8165 / MA-4680).